A 358-amino-acid chain; its full sequence is Cinnamyl alcohol dehydrogenase 1 (358 aa).

In terms of domain architecture, Enoyl reductase (ER) spans 21–349 (GILTPYTYTL…KNDVRYRFVV (329 aa)). Cys48 lines the Zn(2+) pocket. Residue Ser50 participates in NADP(+) binding. Zn(2+) contacts are provided by His70, Glu71, Cys101, Cys104, Cys107, Cys115, and Cys164. NADP(+) contacts are provided by residues Thr168, 189 to 194 (GLGGVG), 212 to 217 (SSSDKK), Thr252, Gly276, and 299 to 301 (SFV).

This sequence belongs to the zinc-containing alcohol dehydrogenase family. As to quaternary structure, homodimer. Requires Zn(2+) as cofactor.

The catalysed reaction is (E)-cinnamyl alcohol + NADP(+) = (E)-cinnamaldehyde + NADPH + H(+). It carries out the reaction (E)-coniferol + NADP(+) = (E)-coniferaldehyde + NADPH + H(+). It catalyses the reaction (E)-sinapyl alcohol + NADP(+) = (E)-sinapaldehyde + NADPH + H(+). The enzyme catalyses (E)-4-coumaroyl alcohol + NADP(+) = (E)-4-coumaraldehyde + NADPH + H(+). It functions in the pathway aromatic compound metabolism; phenylpropanoid biosynthesis. Functionally, involved in lignin biosynthesis. Catalyzes the final step specific for the production of lignin monomers. Catalyzes the NADPH-dependent reduction of coniferaldehyde, 5-hydroxyconiferaldehyde, sinapaldehyde, 4-coumaraldehyde and caffeyl aldehyde to their respective alcohols. Can use coumaraldehyde and, with a lower efficiency, coniferaldehyde and sinapaldehyde as substrates. The polypeptide is Cinnamyl alcohol dehydrogenase 1 (Medicago truncatula (Barrel medic)).